The sequence spans 466 residues: Sulfate adenylyltransferase subunit 1 (466 aa).

Residues Lys22 to Glu237 enclose the tr-type G domain. Positions Gly31–Ser38 are G1. A GTP-binding site is contributed by Gly31 to Ser38. The interval Gly89–Asp93 is G2. A G3 region spans residues Asp110–Gly113. Residues Asp110–His114 and Asn165–Asp168 contribute to the GTP site. Positions Asn165 to Asp168 are G4. The G5 stretch occupies residues Ser202 to Leu204.

This sequence belongs to the TRAFAC class translation factor GTPase superfamily. Classic translation factor GTPase family. CysN/NodQ subfamily. As to quaternary structure, heterodimer composed of CysD, the smaller subunit, and CysN.

The enzyme catalyses sulfate + ATP + H(+) = adenosine 5'-phosphosulfate + diphosphate. Its pathway is sulfur metabolism; hydrogen sulfide biosynthesis; sulfite from sulfate: step 1/3. Functionally, with CysD forms the ATP sulfurylase (ATPS) that catalyzes the adenylation of sulfate producing adenosine 5'-phosphosulfate (APS) and diphosphate, the first enzymatic step in sulfur assimilation pathway. APS synthesis involves the formation of a high-energy phosphoric-sulfuric acid anhydride bond driven by GTP hydrolysis by CysN coupled to ATP hydrolysis by CysD. The polypeptide is Sulfate adenylyltransferase subunit 1 (Colwellia psychrerythraea (strain 34H / ATCC BAA-681) (Vibrio psychroerythus)).